The chain runs to 272 residues: Ethanolamine ammonia-lyase small subunit (272 aa).

Residues V161, E182, and C211 each coordinate adenosylcob(III)alamin.

It belongs to the EutC family. The basic unit is a heterodimer which dimerizes to form tetramers. The heterotetramers trimerize; 6 large subunits form a core ring with 6 small subunits projecting outwards. The cofactor is adenosylcob(III)alamin.

It is found in the bacterial microcompartment. It catalyses the reaction ethanolamine = acetaldehyde + NH4(+). It participates in amine and polyamine degradation; ethanolamine degradation. Functionally, catalyzes the deamination of various vicinal amino-alcohols to oxo compounds. Allows this organism to utilize ethanolamine as the sole source of nitrogen and carbon in the presence of external vitamin B12. In Xanthomonas campestris pv. campestris (strain ATCC 33913 / DSM 3586 / NCPPB 528 / LMG 568 / P 25), this protein is Ethanolamine ammonia-lyase small subunit.